The primary structure comprises 113 residues: Large ribosomal subunit protein bL17 (113 aa).

This sequence belongs to the bacterial ribosomal protein bL17 family. As to quaternary structure, part of the 50S ribosomal subunit. Contacts protein L32.

This is Large ribosomal subunit protein bL17 from Caldicellulosiruptor bescii (strain ATCC BAA-1888 / DSM 6725 / KCTC 15123 / Z-1320) (Anaerocellum thermophilum).